A 308-amino-acid chain; its full sequence is Oxygen-dependent coproporphyrinogen-III oxidase (308 aa).

Serine 97 serves as a coordination point for substrate. The a divalent metal cation site is built by histidine 101 and histidine 111. The Proton donor role is filled by histidine 111. 113–115 (NVR) contributes to the substrate binding site. Residues histidine 153 and histidine 183 each coordinate a divalent metal cation. An important for dimerization region spans residues 248-283 (YVEFNLVWDRGTHFGLQSGGRTESILMSMPPLASWS). 266–268 (GGR) lines the substrate pocket.

Belongs to the aerobic coproporphyrinogen-III oxidase family. As to quaternary structure, homodimer. Requires a divalent metal cation as cofactor.

It localises to the cytoplasm. The enzyme catalyses coproporphyrinogen III + O2 + 2 H(+) = protoporphyrinogen IX + 2 CO2 + 2 H2O. The protein operates within porphyrin-containing compound metabolism; protoporphyrin-IX biosynthesis; protoporphyrinogen-IX from coproporphyrinogen-III (O2 route): step 1/1. In terms of biological role, involved in the heme biosynthesis. Catalyzes the aerobic oxidative decarboxylation of propionate groups of rings A and B of coproporphyrinogen-III to yield the vinyl groups in protoporphyrinogen-IX. In Polaromonas sp. (strain JS666 / ATCC BAA-500), this protein is Oxygen-dependent coproporphyrinogen-III oxidase.